The following is a 500-amino-acid chain: MLDDRKFSEQELVRRNKYKNLVDQNKDPYKITNWKRNTTLLKLNEKYKDYSKEELLNLTQELVIVAGRIKLYREAGKKAAFVNIDDQDSSIQLYVRLDEIGQEAFEDFRDLDLGDIIGVKGNMMRTDHGELSIRCKEVVLLSKALRPLPDKHAGIQDIEEKYRRRYVDLIMNHDVRKTFQARTKIIRTMQNFLDNRGYMEVETPILHSLKGGASAKPFVTHYNVLNTDVYLRIATELHLKRLIVGGFEGVYEIGRIFRNEGMSTRHNPEFTSIELYVAYEDMFFLMDLTEEIFRVCNSAVNSSSVIEYNNVKIDLSKPFKRLHMVDGIKQVTGVDFWQEMTVEQALELAKKHNVYVEKHQESVGHIINLFYEEFVESTIVEPTFVYGHPKEISPLAKSNPNDPRFTDRFELFIIGREYANAFSELNDPIDQYERFKAQLEEESKGNDEANDMDIDFVEALEHAMPPTAGIGIGIDRLVMLLTNCDSIKDVLLFPQMKPKE.

Residues Glu-410 and Glu-417 each contribute to the Mg(2+) site.

Belongs to the class-II aminoacyl-tRNA synthetase family. Homodimer. Requires Mg(2+) as cofactor.

Its subcellular location is the cytoplasm. The catalysed reaction is tRNA(Lys) + L-lysine + ATP = L-lysyl-tRNA(Lys) + AMP + diphosphate. This is Lysine--tRNA ligase from Mycoplasma capricolum subsp. capricolum (strain California kid / ATCC 27343 / NCTC 10154).